The chain runs to 254 residues: Metalloprotease YcaL (254 aa).

A signal peptide spans 1–19; that stretch reads MKNTKLLLAIATSAALLTG. A lipid anchor (N-palmitoyl cysteine) is attached at Cys20. A lipid anchor (S-diacylglycerol cysteine) is attached at Cys20. His134 contacts Zn(2+). The active site involves Glu135. Zn(2+) is bound by residues His138 and Glu193. Positions 227 to 254 are disordered; the sequence is GRTQSMFDSHPPSTERAQHIRDRIASGK. Basic and acidic residues predominate over residues 242–254; sequence RAQHIRDRIASGK.

This sequence belongs to the peptidase M48B family. Zn(2+) serves as cofactor.

The protein resides in the cell inner membrane. Its function is as follows. Involved in the degradation of the LPS-assembly protein LptD. Degrades LptD that have engaged the Bam complex but are stalled at an early step in the outer membrane protein assembly process. This Escherichia coli (strain K12) protein is Metalloprotease YcaL (ycaL).